The primary structure comprises 172 residues: Adenine phosphoribosyltransferase (172 aa).

This sequence belongs to the purine/pyrimidine phosphoribosyltransferase family. Homodimer.

The protein resides in the cytoplasm. It catalyses the reaction AMP + diphosphate = 5-phospho-alpha-D-ribose 1-diphosphate + adenine. It functions in the pathway purine metabolism; AMP biosynthesis via salvage pathway; AMP from adenine: step 1/1. In terms of biological role, catalyzes a salvage reaction resulting in the formation of AMP, that is energically less costly than de novo synthesis. The polypeptide is Adenine phosphoribosyltransferase (Prochlorococcus marinus (strain SARG / CCMP1375 / SS120)).